Reading from the N-terminus, the 74-residue chain is Protein SlyX homolog (74 aa).

Belongs to the SlyX family.

The chain is Protein SlyX homolog from Aliivibrio salmonicida (strain LFI1238) (Vibrio salmonicida (strain LFI1238)).